The following is a 186-amino-acid chain: Peptidyl-tRNA hydrolase (186 aa).

A tRNA-binding site is contributed by Y14. The active-site Proton acceptor is the H19. 3 residues coordinate tRNA: Y64, N66, and N112.

This sequence belongs to the PTH family. As to quaternary structure, monomer.

The protein resides in the cytoplasm. The catalysed reaction is an N-acyl-L-alpha-aminoacyl-tRNA + H2O = an N-acyl-L-amino acid + a tRNA + H(+). Functionally, hydrolyzes ribosome-free peptidyl-tRNAs (with 1 or more amino acids incorporated), which drop off the ribosome during protein synthesis, or as a result of ribosome stalling. In terms of biological role, catalyzes the release of premature peptidyl moieties from peptidyl-tRNA molecules trapped in stalled 50S ribosomal subunits, and thus maintains levels of free tRNAs and 50S ribosomes. This chain is Peptidyl-tRNA hydrolase, found in Bacillus cereus (strain Q1).